The chain runs to 392 residues: Iron-sulfur cluster assembly SufBD family protein ML0594 (392 aa).

It belongs to the iron-sulfur cluster assembly SufBD family.

The sequence is that of Iron-sulfur cluster assembly SufBD family protein ML0594 from Mycobacterium leprae (strain TN).